Reading from the N-terminus, the 343-residue chain is Galactoside alpha-(1,2)-fucosyltransferase 2 (343 aa).

The Cytoplasmic portion of the chain corresponds to 1–14 (MLVVQMPFSFPVAH). The helical; Signal-anchor for type II membrane protein transmembrane segment at 15-28 (FILFVFTVSTIFHI) threads the bilayer. At 29–343 (QQRLAKIQAM…AADLSPLLKH (315 aa)) the chain is on the lumenal side. N-linked (GlcNAc...) asparagine glycans are attached at residues asparagine 188, asparagine 282, and asparagine 308.

The protein belongs to the glycosyltransferase 11 family.

It localises to the golgi apparatus. It is found in the golgi stack membrane. It catalyses the reaction a beta-D-galactosyl-(1-&gt;3)-N-acetyl-beta-D-glucosaminyl derivative + GDP-beta-L-fucose = an alpha-L-Fuc-(1-&gt;2)-beta-D-Gal-(1-&gt;3)-beta-D-GlcNAc derivative + GDP + H(+). The catalysed reaction is a beta-D-galactosyl-(1-&gt;4)-N-acetyl-beta-D-glucosaminyl derivative + GDP-beta-L-fucose = an alpha-L-Fuc-(1-&gt;2)-beta-D-Gal-(1-&gt;4)-beta-D-GlcNAc derivative + GDP + H(+). The enzyme catalyses a neolactoside nLc4Cer + GDP-beta-L-fucose = a neolactoside IV(2)-alpha-Fuc-nLc4Cer + GDP + H(+). It carries out the reaction a neolactoside nLc4Cer(d18:1(4E)) + GDP-beta-L-fucose = a neolactoside IV(2)-alpha-Fuc-nLc4Cer(d18:1(4E)) + GDP + H(+). It catalyses the reaction a ganglioside GM1 + GDP-beta-L-fucose = a ganglioside Fuc-GM1 + GDP + H(+). The catalysed reaction is a ganglioside GA1 + GDP-beta-L-fucose = a ganglioside Fuc-GA1 + GDP + H(+). The enzyme catalyses Lc4Cer + GDP-beta-L-fucose = alpha-L-fucosyl-(1-&gt;2)-beta-D-galactosyl-(1-&gt;3)-N-acetyl-beta-D-glucosaminyl-(1-&gt;3)-beta-D-galactosyl-(1-&gt;4)-beta-D-glucosyl-(1&lt;-&gt;1')-ceramide + GDP + H(+). It carries out the reaction a beta-D-Gal-(1-&gt;3)-beta-D-GlcNAc-(1-&gt;3)-beta-D-Gal-(1-&gt;4)-beta-D-Glc-(1&lt;-&gt;1')-Cer(d18:1(4E)) + GDP-beta-L-fucose = alpha-L-fucosyl-(1-&gt;2)- beta-D-galactosyl-(1-&gt;3)-N-acetyl-beta-D-glucosaminyl-(1-&gt;3)-beta-D-galactosyl-(1-&gt;4)-beta-D-glucosyl-(1&lt;-&gt;1')-N-acylsphing-4-enine + GDP + H(+). It catalyses the reaction a ganglioside GD1b + GDP-beta-L-fucose = a ganglioside Fuc-GD1b + GDP + H(+). The catalysed reaction is a ganglioside GM1 (d18:1(4E)) + GDP-beta-L-fucose = a ganglioside Fuc-GM1 (d18:1(4E)) + GDP + H(+). The enzyme catalyses a globoside GalGb4Cer (d18:1(4E)) + GDP-beta-L-fucose = a globoside Globo-H (d18:1(4E)) + GDP + H(+). It carries out the reaction a lactoside III(4)-a-Fuc-Lc4Cer + GDP-beta-L-fucose = a lactoside IV(2),III(4)-a-[Fuc]2-Lc4Cer + GDP + H(+). It catalyses the reaction beta-D-galactosyl-(1-&gt;3)-N-acetyl-D-galactosamine + GDP-beta-L-fucose = alpha-L-fucosyl-(1-&gt;2)-beta-D-galactosyl-(1-&gt;3)-N-acetyl-D-galactosamine + GDP + H(+). Its pathway is protein modification; protein glycosylation. Catalyzes the transfer of L-fucose, from a guanosine diphosphate-beta-L-fucose, to the terminal galactose on both O- and N-linked glycans chains of cell surface glycoproteins and glycolipids and the resulting epitope regulates several processes such as cell-cell interaction including host-microbe interaction, cell surface expression and cell proliferation. Preferentially fucosylates gangliosides GA1 and GM1 in the antrum, cecum and colon and in the female reproductive organs. Fucosylated host glycoproteins or glycolipids mediate interaction with intestinal microbiota influencing its composition. Creates a soluble precursor oligosaccharide FuC-alpha ((1,2)Galbeta-) called the H antigen which is an essential substrate for the final step in the soluble ABO blood group antigen synthesis pathway. The chain is Galactoside alpha-(1,2)-fucosyltransferase 2 from Pongo pygmaeus (Bornean orangutan).